A 158-amino-acid chain; its full sequence is Ankyrin repeat domain-containing protein 37 (158 aa).

ANK repeat units follow at residues 1–25 (MLLLDCNPEVDGLKHLLETGASVNA), 30–59 (CKQSPVHLAAGSGLACFLLWQLQTGADLNQ), and 63–92 (LGEAPLHKAAKVGSLECLSLLVASDAQIDL). Residues 129–149 (EHPDRNDCVAVLRQKRSLGSV) carry the Nuclear localization signal motif.

In terms of processing, ubiquitinated by the CRL2(FEM1B) complex, leading to its degradation. In terms of tissue distribution, mainly expressed in testis, small intestine, colon, blood leukocytes and in pancreatic adenocarcinoma cells.

The protein localises to the nucleus. The protein resides in the cytoplasm. This Homo sapiens (Human) protein is Ankyrin repeat domain-containing protein 37.